We begin with the raw amino-acid sequence, 891 residues long: Alanine--tRNA ligase (891 aa).

Histidine 564, histidine 568, cysteine 677, and histidine 681 together coordinate Zn(2+).

The protein belongs to the class-II aminoacyl-tRNA synthetase family. It depends on Zn(2+) as a cofactor.

The protein localises to the cytoplasm. It carries out the reaction tRNA(Ala) + L-alanine + ATP = L-alanyl-tRNA(Ala) + AMP + diphosphate. In terms of biological role, catalyzes the attachment of alanine to tRNA(Ala) in a two-step reaction: alanine is first activated by ATP to form Ala-AMP and then transferred to the acceptor end of tRNA(Ala). Also edits incorrectly charged Ser-tRNA(Ala) and Gly-tRNA(Ala) via its editing domain. The sequence is that of Alanine--tRNA ligase from Rhodopseudomonas palustris (strain HaA2).